A 99-amino-acid chain; its full sequence is SAGA-associated factor 11 (99 aa).

The SGF11-type zinc-finger motif lies at 71-92; it reads IHCENCGRDVSANRLAAHLQRC.

Belongs to the SGF11 family. In terms of assembly, component of the 1.8 MDa SAGA transcription coactivator-HAT complex. SAGA is built of 5 distinct domains with specialized functions. Within the SAGA complex, SUS1, SGF11, SGF73 and UBP8 form an additional subcomplex of SAGA called the DUB module (deubiquitination module). Interacts directly with SGF73, SUS1 and UBP8.

It localises to the nucleus. Functionally, functions as a component of the transcription regulatory histone acetylation (HAT) complex SAGA. At the promoters, SAGA is required for recruitment of the basal transcription machinery. It influences RNA polymerase II transcriptional activity through different activities such as TBP interaction and promoter selectivity, interaction with transcription activators, and chromatin modification through histone acetylation and deubiquitination. SAGA acetylates nucleosomal histone H3 to some extent (to form H3K9ac, H3K14ac, H3K18ac and H3K23ac). SAGA interacts with DNA via upstream activating sequences (UASs). Involved in transcriptional regulation of a subset of SAGA-regulated genes. Within the SAGA complex, participates in a subcomplex, that specifically deubiquitinates histones H2B. The chain is SAGA-associated factor 11 from Saccharomyces cerevisiae (strain RM11-1a) (Baker's yeast).